Consider the following 100-residue polypeptide: DNA-binding protein HU (100 aa).

Belongs to the bacterial histone-like protein family.

In terms of biological role, histone-like DNA-binding protein which is capable of wrapping DNA to stabilize it, and thus to prevent its denaturation under extreme environmental conditions. This is DNA-binding protein HU (hup) from Synechocystis sp. (strain ATCC 27184 / PCC 6803 / Kazusa).